Consider the following 150-residue polypeptide: Deoxyuridine 5'-triphosphate nucleotidohydrolase (150 aa).

Substrate is bound by residues 69-71 (RSG), N82, and 86-88 (LID).

Belongs to the dUTPase family. Mg(2+) serves as cofactor.

It carries out the reaction dUTP + H2O = dUMP + diphosphate + H(+). It participates in pyrimidine metabolism; dUMP biosynthesis; dUMP from dCTP (dUTP route): step 2/2. This enzyme is involved in nucleotide metabolism: it produces dUMP, the immediate precursor of thymidine nucleotides and it decreases the intracellular concentration of dUTP so that uracil cannot be incorporated into DNA. In Chromobacterium violaceum (strain ATCC 12472 / DSM 30191 / JCM 1249 / CCUG 213 / NBRC 12614 / NCIMB 9131 / NCTC 9757 / MK), this protein is Deoxyuridine 5'-triphosphate nucleotidohydrolase.